A 484-amino-acid polypeptide reads, in one-letter code: Putative cysteine ligase BshC (484 aa).

Residues 372–435 (RAFRDRVEGL…AARDEVLARH (64 aa)) are a coiled coil.

It belongs to the BshC family.

The polypeptide is Putative cysteine ligase BshC (Thermus thermophilus (strain ATCC BAA-163 / DSM 7039 / HB27)).